Consider the following 209-residue polypeptide: Ribulose-phosphate 3-epimerase (209 aa).

Residue Ser8 participates in substrate binding. Residues His33, Asp35, His64, and Asp170 each contribute to the a divalent metal cation site. The active-site Proton acceptor is the Asp35. Substrate-binding positions include His64, 170–172 (DGG), and 191–192 (GS). The active-site Proton donor is Asp170.

The protein belongs to the ribulose-phosphate 3-epimerase family. The cofactor is a divalent metal cation.

It carries out the reaction D-ribulose 5-phosphate = D-xylulose 5-phosphate. Its pathway is carbohydrate degradation. In terms of biological role, catalyzes the reversible epimerization of D-ribulose 5-phosphate to D-xylulose 5-phosphate. This is Ribulose-phosphate 3-epimerase from Mycoplasma genitalium (strain ATCC 33530 / DSM 19775 / NCTC 10195 / G37) (Mycoplasmoides genitalium).